The following is a 351-amino-acid chain: Secreted frizzled-related sequence protein 4 (351 aa).

Residues 1-18 (MLRSILVALCLWLRLALG) form the signal peptide. The region spanning 19–139 (VRGAPCEAVR…VYDRGVCISP (121 aa)) is the FZ domain. 5 disulfides stabilise this stretch: C24–C85, C32–C78, C69–C108, C97–C136, and C101–C125. N38 and N68 each carry an N-linked (GlcNAc...) asparagine glycan. 3 N-linked (GlcNAc...) asparagine glycosylation sites follow: N116, N194, and N240. In terms of domain architecture, NTR spans 178-306 (CKCKKVKPTL…TIQDKKQIAS (129 aa)). Residues 293-303 (EQQRTIQDKKQ) show a composition bias toward basic and acidic residues. The disordered stretch occupies residues 293-351 (EQQRTIQDKKQIASRTSRTSRSNPPKSKGRPPAPKPASPKKNIKARSAPKKSNLKKSAS). Positions 306-318 (SRTSRTSRSNPPK) are enriched in low complexity. Basic residues predominate over residues 333–351 (KNIKARSAPKKSNLKKSAS).

Belongs to the secreted frizzled-related protein (sFRP) family. In terms of tissue distribution, expressed in the ovary. Localized to granulosa cells of periovulatory follicles and corpora lutea. Weakly expressed in adult tissues including kidney, brain and lung.

Its subcellular location is the secreted. Its function is as follows. Soluble frizzled-related proteins (sFRPS) function as modulators of Wnt signaling through direct interaction with Wnts. They have a role in regulating cell growth and differentiation in specific cell types. SFRP4 plays a role in bone morphogenesis. May also act as a regulator of adult uterine morphology and function. May also increase apoptosis during ovulation possibly through modulation of FZ1/FZ4/WNT4 signaling. Has phosphaturic effects by specifically inhibiting sodium-dependent phosphate uptake. This is Secreted frizzled-related sequence protein 4 (Sfrp4) from Mus musculus (Mouse).